We begin with the raw amino-acid sequence, 435 residues long: Putative FBD-associated F-box protein At5g56820 (435 aa).

One can recognise an F-box domain in the interval 14–60; the sequence is SDRISYLPDDLLLRILSFIHTSDAISTSLLSKRWKFVWKMMPTLDLD. The 50-residue stretch at 341-390 folds into the FBD domain; sequence VRKPNSVPECLTFHLETLEWQGYAGRPEDKEIAVYILGNALRLNTATISR.

The protein is Putative FBD-associated F-box protein At5g56820 of Arabidopsis thaliana (Mouse-ear cress).